The following is a 130-amino-acid chain: Small ribosomal subunit protein uS11 (130 aa).

Belongs to the universal ribosomal protein uS11 family. In terms of assembly, part of the 30S ribosomal subunit. Interacts with proteins S7 and S18. Binds to IF-3.

Its function is as follows. Located on the platform of the 30S subunit, it bridges several disparate RNA helices of the 16S rRNA. Forms part of the Shine-Dalgarno cleft in the 70S ribosome. This chain is Small ribosomal subunit protein uS11, found in Tropheryma whipplei (strain TW08/27) (Whipple's bacillus).